Here is a 504-residue protein sequence, read N- to C-terminus: Maturase K (504 aa).

The protein belongs to the intron maturase 2 family. MatK subfamily.

It localises to the plastid. It is found in the chloroplast. Usually encoded in the trnK tRNA gene intron. Probably assists in splicing its own and other chloroplast group II introns. The sequence is that of Maturase K from Quercus gemelliflora (Pasang hiris).